The sequence spans 417 residues: Acetyltransferase nanB (417 aa).

The N-terminal stretch at 1-24 is a signal peptide; that stretch reads MRPSTTTLSLLVFLISSILLATTG. Helical transmembrane passes span 150 to 170, 284 to 304, 307 to 327, 356 to 376, and 389 to 409; these read LAVSAWQYLLADIGFSLLKNI, YLNNALVFAQSGIVHVYFNWI, VQDGDVGCMAFYISFVAGYFL, VGALWVATFLTIVTPWWVYPF, and FVDVFGFQGALTVVFMGAAAL.

This sequence belongs to the wax synthase family.

It is found in the membrane. It functions in the pathway secondary metabolite biosynthesis. Functionally, acetyltransferase; part of the gene cluster that mediates the biosynthesis of the benzazepine alkaloid nanangelenin A which contains an unprecedented 3,4-dihydro-1-benzazepine-2,5-dione-N-prenyl-N-acetoxy-anthranilamide scaffold. The first step of nanangelenin biosynthesis is catalyzed by the indoleamine 2,3-dioxygenase nanC which produces N-formyl-kynurenine through the catabolism of tryptophan. The two-module NRPS nanA then utilizes anthranilate (Ant) and L-kynurenine (L-Kyn) to assemble the dipeptide product nanangelenin B. The first adenylation domain of nanA (A1) loads anthranilate onto the T1 domain, while A2 loads kynurenine, generated through spontaneous nonenzymatic deformylation of the nanC-supplied N-formyl-kynurenine. The peptide bond formation between the tethered amino acids is catalyzed by the first condensation domain (C1) between anthranilate's carbonyl carbon and kynurenine's aliphatic primary amine. The second C domain (C2) catalyzes the final cyclization event between the aromatic amine of kynurenine and the tethered carbonyl carbon, yielding nanangelenin B. The terminal T3 domain enhances the catalytic efficiency of C2, suggesting the T2-tethered Ant-L-Kyn is transferred to T3 prior to cyclization by C2. Once released from nanA, nanangelenin B is then prenylated by the prenyltransferase nanD to form nanangelenin C. Nanangelenin C is then N-hydroxylated by the FAD-dependent monooxygenase nanF and further acetylated by the acetyltransferase nanB to yield nanangelenin F. Finally, the N-methyltransferase nanE methylates the amide nitrogen of 1-benzazepine to convert nanangelenin F into nanangelenin A. NanE is also able to methylate most of the intermediates of the pathway such as nanangelenin B and nanangelenin C to produce nanangelenin D and nanangelenin E, respectively. The polypeptide is Acetyltransferase nanB (Aspergillus nanangensis).